A 554-amino-acid chain; its full sequence is CTP synthase (554 aa).

An amidoligase domain region spans residues Met1–Leu265. Ser13 provides a ligand contact to CTP. Ser13 is a binding site for UTP. ATP is bound by residues Ser14 to Ile19 and Asp71. Mg(2+)-binding residues include Asp71 and Glu139. CTP contacts are provided by residues Asp146–Glu148, Lys186–Gln191, and Lys222. UTP is bound by residues Lys186–Gln191 and Lys222. A Glutamine amidotransferase type-1 domain is found at Thr292–Gly545. An L-glutamine-binding site is contributed by Gly353. Cys380 acts as the Nucleophile; for glutamine hydrolysis in catalysis. Residues Tyr381–Gln384, Glu404, and Arg471 contribute to the L-glutamine site. Residues His518 and Glu520 contribute to the active site.

Belongs to the CTP synthase family. As to quaternary structure, homotetramer.

The enzyme catalyses UTP + L-glutamine + ATP + H2O = CTP + L-glutamate + ADP + phosphate + 2 H(+). It carries out the reaction L-glutamine + H2O = L-glutamate + NH4(+). It catalyses the reaction UTP + NH4(+) + ATP = CTP + ADP + phosphate + 2 H(+). It participates in pyrimidine metabolism; CTP biosynthesis via de novo pathway; CTP from UDP: step 2/2. With respect to regulation, allosterically activated by GTP, when glutamine is the substrate; GTP has no effect on the reaction when ammonia is the substrate. The allosteric effector GTP functions by stabilizing the protein conformation that binds the tetrahedral intermediate(s) formed during glutamine hydrolysis. Inhibited by the product CTP, via allosteric rather than competitive inhibition. In terms of biological role, catalyzes the ATP-dependent amination of UTP to CTP with either L-glutamine or ammonia as the source of nitrogen. Regulates intracellular CTP levels through interactions with the four ribonucleotide triphosphates. This chain is CTP synthase, found in Xanthomonas campestris pv. campestris (strain B100).